A 393-amino-acid polypeptide reads, in one-letter code: 4-hydroxyphenylpyruvate dioxygenase (393 aa).

Thr2 carries the N-acetylthreonine modification. VOC domains follow at residues His18 to Phe152 and Ile180 to Lys338. His183 serves as a coordination point for Fe cation. Ser211, Ser226, and Ser250 each carry phosphoserine. His266 and Glu349 together coordinate Fe cation.

It belongs to the 4HPPD family. Homodimer. Fe cation serves as cofactor. Liver.

The protein resides in the cytoplasm. It is found in the endoplasmic reticulum membrane. Its subcellular location is the golgi apparatus membrane. The catalysed reaction is 3-(4-hydroxyphenyl)pyruvate + O2 = homogentisate + CO2. It functions in the pathway amino-acid degradation; L-phenylalanine degradation; acetoacetate and fumarate from L-phenylalanine: step 3/6. In terms of biological role, catalyzes the conversion of 4-hydroxyphenylpyruvic acid to homogentisic acid, one of the steps in tyrosine catabolism. The chain is 4-hydroxyphenylpyruvate dioxygenase (HPD) from Sus scrofa (Pig).